The sequence spans 68 residues: ATP synthase F(0) complex subunit 8 (68 aa).

A helical transmembrane segment spans residues 8–24 (TWFTIIMAMLPTLYLIT). Lys54 bears the N6-acetyllysine; alternate mark. Residue Lys54 is modified to N6-succinyllysine; alternate. Lys57 is subject to N6-acetyllysine.

This sequence belongs to the ATPase protein 8 family. As to quaternary structure, component of the ATP synthase complex composed at least of ATP5F1A/subunit alpha, ATP5F1B/subunit beta, ATP5MC1/subunit c (homooctomer), MT-ATP6/subunit a, MT-ATP8/subunit 8, ATP5ME/subunit e, ATP5MF/subunit f, ATP5MG/subunit g, ATP5MK/subunit k, ATP5MJ/subunit j, ATP5F1C/subunit gamma, ATP5F1D/subunit delta, ATP5F1E/subunit epsilon, ATP5PF/subunit F6, ATP5PB/subunit b, ATP5PD/subunit d, ATP5PO/subunit OSCP. ATP synthase complex consists of a soluble F(1) head domain (subunits alpha(3) and beta(3)) - the catalytic core - and a membrane F(0) domain - the membrane proton channel (subunits c, a, 8, e, f, g, k and j). These two domains are linked by a central stalk (subunits gamma, delta, and epsilon) rotating inside the F1 region and a stationary peripheral stalk (subunits F6, b, d, and OSCP). Interacts with PRICKLE3.

The protein resides in the mitochondrion membrane. In terms of biological role, subunit 8, of the mitochondrial membrane ATP synthase complex (F(1)F(0) ATP synthase or Complex V) that produces ATP from ADP in the presence of a proton gradient across the membrane which is generated by electron transport complexes of the respiratory chain. ATP synthase complex consist of a soluble F(1) head domain - the catalytic core - and a membrane F(1) domain - the membrane proton channel. These two domains are linked by a central stalk rotating inside the F(1) region and a stationary peripheral stalk. During catalysis, ATP synthesis in the catalytic domain of F(1) is coupled via a rotary mechanism of the central stalk subunits to proton translocation. In vivo, can only synthesize ATP although its ATP hydrolase activity can be activated artificially in vitro. Part of the complex F(0) domain. In Papio hamadryas (Hamadryas baboon), this protein is ATP synthase F(0) complex subunit 8.